Reading from the N-terminus, the 154-residue chain is Myoglobin (154 aa).

The 147-residue stretch at 2–148 (GLSDGEWQLV…FRNDIAAKYK (147 aa)) folds into the Globin domain. S4 is subject to Phosphoserine. A nitrite-binding site is contributed by H65. H65 serves as a coordination point for O2. T68 carries the post-translational modification Phosphothreonine. H94 provides a ligand contact to heme b.

It belongs to the globin family. Monomeric.

It localises to the cytoplasm. It is found in the sarcoplasm. The catalysed reaction is Fe(III)-heme b-[protein] + nitric oxide + H2O = Fe(II)-heme b-[protein] + nitrite + 2 H(+). It catalyses the reaction H2O2 + AH2 = A + 2 H2O. Its function is as follows. Monomeric heme protein which primary function is to store oxygen and facilitate its diffusion within muscle tissues. Reversibly binds oxygen through a pentacoordinated heme iron and enables its timely and efficient release as needed during periods of heightened demand. Depending on the oxidative conditions of tissues and cells, and in addition to its ability to bind oxygen, it also has a nitrite reductase activity whereby it regulates the production of bioactive nitric oxide. Under stress conditions, like hypoxia and anoxia, it also protects cells against reactive oxygen species thanks to its pseudoperoxidase activity. In Ctenodactylus gundi (Northern gundi), this protein is Myoglobin (MB).